The sequence spans 312 residues: DNA-directed RNA polymerase subunit alpha (312 aa).

Positions 1–229 (MLQYQIDRID…ELFQPLATVS (229 aa)) are alpha N-terminal domain (alpha-NTD). Residues 239 to 312 (EPAAEAQIPL…ISIPQSRTSA (74 aa)) form an alpha C-terminal domain (alpha-CTD) region.

This sequence belongs to the RNA polymerase alpha chain family. In cyanobacteria the RNAP catalytic core is composed of 2 alpha, 1 beta, 1 beta', 1 gamma and 1 omega subunit. When a sigma factor is associated with the core the holoenzyme is formed, which can initiate transcription.

The catalysed reaction is RNA(n) + a ribonucleoside 5'-triphosphate = RNA(n+1) + diphosphate. Its function is as follows. DNA-dependent RNA polymerase catalyzes the transcription of DNA into RNA using the four ribonucleoside triphosphates as substrates. In Prochlorococcus marinus (strain NATL1A), this protein is DNA-directed RNA polymerase subunit alpha.